The primary structure comprises 497 residues: MTVFLSFAFFAAILTHIGCSNQRRSPENGGRRYNRIQHGQCAYTFILPEHDGNCRESATEQYNTNALQRDAPHVETDFSSQKLQHLEHVMENYTQWLQKLENYIVENMKSEMAQIQQNAVQNHTATMLEIGTSLLSQTAEQTRKLTDVETQVLNQTSRLEIQLLENSLSTYELEKQLLQQTNEILKIQEKNSLLEHKILEMEGKHKEELDTLKEEKENLQGLVTRQTFIIQELEKQLSRATSNNSVLQKQQLELMDTVHNLVSLCTKEVLLKGGKREEEKPFRDCADVYQAGFNKSGIYTIYFNNMPEPKKVFCNMDVNEGGWTVIQHREDGSLDFQRGWKEYKMGFGNPSGEYWLGNEFIFAITSQRQYMLRIELMDWEGNRAYSQYDRFHIGNQKQNYRLYLKGHTGTAGKQSSLILHGADFSTKDADNDNCMCKCALMLTGGWWFDACGPSNLNGMFYTAGQNHGKLNGIKWHYFKGPSYSLRSTTMMIRPLDF.

The signal sequence occupies residues 1 to 19 (MTVFLSFAFFAAILTHIGC). Residues 81-119 (QKLQHLEHVMENYTQWLQKLENYIVENMKSEMAQIQQNA) adopt a coiled-coil conformation. 5 N-linked (GlcNAc...) asparagine glycosylation sites follow: N92, N122, N154, N243, and N294. A coiled-coil region spans residues 153 to 261 (LNQTSRLEIQ…LELMDTVHNL (109 aa)). The Fibrinogen C-terminal domain maps to 276–496 (REEEKPFRDC…STTMMIRPLD (221 aa)). Intrachain disulfides connect C285–C314 and C438–C451.

In terms of assembly, homooligomer. Interacts with TEK/TIE2. Interacts with SVEP1/polydom. Interacts with THBD; this interaction significantly inhibits the generation of activated PC and TAFIa/CPB2 by the thrombin/thrombomodulin complex.

The protein localises to the secreted. Its function is as follows. Binds and activates TIE2 receptor by inducing its tyrosine phosphorylation. Implicated in endothelial developmental processes later and distinct from that of VEGF. Appears to play a crucial role in mediating reciprocal interactions between the endothelium and surrounding matrix and mesenchyme. Mediates blood vessel maturation/stability. It may play an important role in the heart early development. This chain is Angiopoietin-1 (Angpt1), found in Rattus norvegicus (Rat).